Consider the following 592-residue polypeptide: Methionine--tRNA ligase (592 aa).

Residues 12 to 22 (PYANGPFHVGH) carry the 'HIGH' region motif. Zn(2+) contacts are provided by Cys144, Cys147, Cys157, and Cys160. The 'KMSKS' region signature appears at 342–346 (KMSTS). Thr345 contacts ATP.

The protein belongs to the class-I aminoacyl-tRNA synthetase family. MetG type 1 subfamily. Monomer. The cofactor is Zn(2+).

It is found in the cytoplasm. It catalyses the reaction tRNA(Met) + L-methionine + ATP = L-methionyl-tRNA(Met) + AMP + diphosphate. Functionally, is required not only for elongation of protein synthesis but also for the initiation of all mRNA translation through initiator tRNA(fMet) aminoacylation. This is Methionine--tRNA ligase from Roseiflexus sp. (strain RS-1).